We begin with the raw amino-acid sequence, 106 residues long: RxLR effector protein PSR1 (106 aa).

Residues 1 to 20 (MRLTYVLLVAVTTLLVSCDA) form the signal peptide. A RxLR-dEER motif is present at residues 33–46 (RLLRFVEAADEEER). Residues 50 to 106 (FSPEKLRKMLGDETYRLKKFGKWDSDGHTFDGLKHYLLLSDSSMVKLRNMYKAWLEQ) form a WY domain region. The Bipartite nuclear localization signal (NLS) signature appears at 56-69 (RKMLGDETYRLKKF).

It belongs to the RxLR effector family. As to quaternary structure, interacts with host PINP1.

The protein resides in the secreted. It localises to the host nucleus. Its function is as follows. Secreted effector that possesses RNA silencing suppression activity by inhibiting the biogenesis of small RNAs in the host plant to promote enhanced susceptibility of host to the pathogen during infection. Interferes with secondary siRNA production by associating with host nuclear protein PINP1 that acts as a regulator of the accumulation of both microRNAs and endogenous small interfering RNAs. This Phytophthora sojae (Soybean stem and root rot agent) protein is RxLR effector protein PSR1.